The chain runs to 325 residues: Dimethylsulfide dehydrogenase subunit beta (325 aa).

4Fe-4S ferredoxin-type domains lie at 6 to 35 (ISMVLDLNKCIGCQTCTSACKLQWTNRNGR), 123 to 154 (SYYFYLPRICNHCANPGCLAACARNAIYKRQE), and 156 to 185 (GIVLVDQERCRGYRYCITACPYKKVYFNEQ). Positions 15, 18, 21, 25, 132, 135, and 140 each coordinate [4Fe-4S] cluster. [3Fe-4S] cluster contacts are provided by Cys-144, Cys-165, and Cys-171. The [4Fe-4S] cluster site is built by Cys-175, Cys-192, Cys-195, Cys-207, and Cys-211.

As to quaternary structure, heterotrimer of alpha, beta and gamma subunits. The cofactor is [3Fe-4S] cluster. [4Fe-4S] cluster is required as a cofactor.

The protein resides in the periplasm. In terms of biological role, electron transfer subunit of the dehydrogenase during anaerobic growth on dimethyl sulfide. The chain is Dimethylsulfide dehydrogenase subunit beta (ddhB) from Rhodovulum sulfidophilum (Rhodobacter sulfidophilus).